A 403-amino-acid polypeptide reads, in one-letter code: Argininosuccinate synthase (403 aa).

Residues 12–20 (AYSGGLDTS) and Ala39 contribute to the ATP site. Residues Tyr90 and Ser95 each contribute to the L-citrulline site. Residue Gly120 participates in ATP binding. The L-aspartate site is built by Thr122, Asn126, and Asp127. An L-citrulline-binding site is contributed by Asn126. Residues Arg130, Ser182, Ser191, Glu267, and Tyr279 each contribute to the L-citrulline site.

It belongs to the argininosuccinate synthase family. Type 1 subfamily. In terms of assembly, homotetramer.

The protein localises to the cytoplasm. It carries out the reaction L-citrulline + L-aspartate + ATP = 2-(N(omega)-L-arginino)succinate + AMP + diphosphate + H(+). It functions in the pathway amino-acid biosynthesis; L-arginine biosynthesis; L-arginine from L-ornithine and carbamoyl phosphate: step 2/3. The protein is Argininosuccinate synthase of Vesicomyosocius okutanii subsp. Calyptogena okutanii (strain HA).